Consider the following 512-residue polypeptide: Maturase K (512 aa).

Belongs to the intron maturase 2 family. MatK subfamily.

It localises to the plastid. The protein resides in the chloroplast. Usually encoded in the trnK tRNA gene intron. Probably assists in splicing its own and other chloroplast group II introns. In Zantedeschia aethiopica (White calla lily), this protein is Maturase K.